The chain runs to 275 residues: 1-deoxy-11-beta-hydroxypentalenate dehydrogenase (275 aa).

Residue 12–36 (GAASGIGLALSARFARAGAGVVMAD) participates in NAD(+) binding. Ser144 lines the substrate pocket. Tyr157 acts as the Proton acceptor in catalysis. Residue Lys161 participates in NAD(+) binding.

This sequence belongs to the short-chain dehydrogenases/reductases (SDR) family.

It carries out the reaction 1-deoxy-11beta-hydroxypentalenate + NAD(+) = 1-deoxy-11-oxopentalenate + NADH + H(+). It participates in antibiotic biosynthesis; pentalenolactone biosynthesis. Functionally, catalyzes the oxidation of 1-deoxy-11-beta-hydroxypentalenic acid to 1-deoxy-11-oxopentalenic acid in the biosynthesis of pentalenolactone antibiotic. The protein is 1-deoxy-11-beta-hydroxypentalenate dehydrogenase (penF) of Streptomyces exfoliatus (Streptomyces hydrogenans).